The following is a 261-amino-acid chain: Proliferating cell nuclear antigen (261 aa).

3 positions are modified to N6-acetyllysine: lysine 14, lysine 77, and lysine 80. A DNA-binding region spans residues 61 to 80 (RCDRNLAMGVNLTSMSKILK). An intrachain disulfide couples cysteine 135 to cysteine 162. Residue lysine 164 forms a Glycyl lysine isopeptide (Lys-Gly) (interchain with G-Cter in SUMO2); alternate linkage. Lysine 164 is covalently cross-linked (Glycyl lysine isopeptide (Lys-Gly) (interchain with G-Cter in ubiquitin); alternate). Tyrosine 211 carries the post-translational modification Phosphotyrosine; by EGFR. The residue at position 248 (lysine 248) is an N6-acetyllysine. Lysine 254 participates in a covalent cross-link: Glycyl lysine isopeptide (Lys-Gly) (interchain with G-Cter in SUMO2).

The protein belongs to the PCNA family. In terms of assembly, homotrimer. Interacts with p300/EP300; the interaction occurs on chromatin in UV-irradiated damaged cells. Interacts with CREBBP (via transactivation domain and C-terminus); the interaction occurs on chromatin in UV-irradiated damaged cells. Directly interacts with POLD1, POLD3 and POLD4 subunits of the DNA polymerase delta complex, POLD3 being the major interacting partner; the interaction with POLD3 is inhibited by CDKN1A/p21(CIP1). Forms a complex with activator 1 heteropentamer in the presence of ATP. Interacts with EXO1, POLH, POLK, DNMT1, ERCC5, FEN1, CDC6 and POLDIP2. Interacts with POLB. Interacts with APEX2; this interaction is triggered by reactive oxygen species and increased by misincorporation of uracil in nuclear DNA. Forms a ternary complex with DNTTIP2 and core histone. Interacts with KCTD10 and PPP1R15A. Interacts with SMARCA5/SNF2H. Interacts with BAZ1B/WSTF; the interaction is direct and is required for BAZ1B/WSTF binding to replication foci during S phase. Interacts with HLTF and SHPRH. Interacts with NUDT15; this interaction is disrupted in response to UV irradiation and acetylation. Interacts with CDKN1A/p21(CIP1) and CDT1; interacts via their PIP-box which also recruits the DCX(DTL) complex. The interaction with CDKN1A inhibits POLD3 binding. Interacts with DDX11. Interacts with EGFR; positively regulates PCNA. Interacts with PARPBP. Interacts (when ubiquitinated) with SPRTN; leading to enhance RAD18-mediated PCNA ubiquitination. Interacts (when polyubiquitinated) with ZRANB3. Interacts with SMARCAD1. Interacts with CDKN1C. Interacts with PCLAF (via PIP-box). Interacts with RTEL1 (via PIP-box); the interaction is direct and essential for the suppression of telomere fragility. Interacts with FAM111A (via PIP-box); the interaction is direct and required for PCNA loading on chromatin binding. Interacts with LIG1. Interacts with SETMAR. Interacts with ANKRD17. Interacts with FBXO18/FBH1 (via PIP-box); the interaction recruits the DCX(DTL) complex and promotes ubiquitination and degradation of FBXO18/FBH1. Interacts with POLN. Interacts with SDE2 (via PIP-box); the interaction is direct and prevents ultraviolet light induced monoubiquitination. Component of the replisome complex composed of at least DONSON, MCM2, MCM7, PCNA and TICRR; interaction at least with PCNA occurs during DNA replication. Interacts with MAPK15; the interaction is chromatin binding dependent and prevents MDM2-mediated PCNA destruction by inhibiting the association of PCNA with MDM2. Interacts with PARP10 (via PIP-box). Interacts with DDI2. Interacts with HMCES (via PIP-box). Interacts with TRAIP (via PIP-box). Interacts with UHRF2. Interacts with ALKBH2; this interaction is enhanced during the S-phase of the cell cycle. Interacts with ATAD5; the interaction promotes USP1-mediated PCNA deubiquitination. Interacts (when phosphorylated) with GRB2. Interacts with nuclear UNG; this interaction mediates UNG recruitment to S-phase replication foci. Interacts with ERCC6L2 (via an atypical PIP-box); this interaction facilitates cenrtomeric localization of ERCC6L2. In terms of processing, phosphorylated. Phosphorylation at Tyr-211 by EGFR stabilizes chromatin-associated PCNA. Post-translationally, acetylated by CREBBP and p300/EP300; preferentially acetylated by CREBBP on Lys-80, Lys-13 and Lys-14 and on Lys-77 by p300/EP300 upon loading on chromatin in response to UV irradiation. Lysine acetylation disrupts association with chromatin, hence promoting PCNA ubiquitination and proteasomal degradation in response to UV damage in a CREBBP- and EP300-dependent manner. Acetylation disrupts interaction with NUDT15 and promotes degradation. Ubiquitinated. Following DNA damage, can be either monoubiquitinated to stimulate direct bypass of DNA lesions by specialized DNA polymerases or polyubiquitinated to promote recombination-dependent DNA synthesis across DNA lesions by template switching mechanisms. Following induction of replication stress, monoubiquitinated by the UBE2B-RAD18 complex on Lys-164, leading to recruit translesion (TLS) polymerases, which are able to synthesize across DNA lesions in a potentially error-prone manner. An error-free pathway also exists and requires non-canonical polyubiquitination on Lys-164 through 'Lys-63' linkage of ubiquitin moieties by the E2 complex UBE2N-UBE2V2 and the E3 ligases, HLTF, RNF8 and SHPRH. This error-free pathway, also known as template switching, employs recombination mechanisms to synthesize across the lesion, using as a template the undamaged, newly synthesized strand of the sister chromatid. Monoubiquitination at Lys-164 also takes place in undamaged proliferating cells, and is mediated by the DCX(DTL) complex, leading to enhance PCNA-dependent translesion DNA synthesis. Sumoylated during S phase. In terms of processing, methylated on glutamate residues by ARMT1.

Its subcellular location is the nucleus. Functionally, auxiliary protein of DNA polymerase delta and epsilon, is involved in the control of eukaryotic DNA replication by increasing the polymerase's processibility during elongation of the leading strand. Induces a robust stimulatory effect on the 3'-5' exonuclease and 3'-phosphodiesterase, but not apurinic-apyrimidinic (AP) endonuclease, APEX2 activities. Has to be loaded onto DNA in order to be able to stimulate APEX2. Plays a key role in DNA damage response (DDR) by being conveniently positioned at the replication fork to coordinate DNA replication with DNA repair and DNA damage tolerance pathways. Acts as a loading platform to recruit DDR proteins that allow completion of DNA replication after DNA damage and promote postreplication repair: Monoubiquitinated PCNA leads to recruitment of translesion (TLS) polymerases, while 'Lys-63'-linked polyubiquitination of PCNA is involved in error-free pathway and employs recombination mechanisms to synthesize across the lesion. The polypeptide is Proliferating cell nuclear antigen (PCNA) (Bos taurus (Bovine)).